A 327-amino-acid chain; its full sequence is Chlorophenol reductase (327 aa).

A signal peptide spans 1–24 (MKKTLGIILSISLAFSVLALPIFA). One can recognise a LysM domain in the interval 65 to 110 (TYYTVVSGDFFWQIAAKHGLTIDALAKLNPQIKNVNLIFPGQKILV).

Requires cob(I)alamin as cofactor.

It is found in the secreted. Its subcellular location is the cell wall. The protein resides in the cell membrane. Its activity is regulated as follows. Inhibited by sulfide and to a lesser extent by nitrite. In terms of biological role, reductive dechlorination of ortho-chlorophenols. Dechlorinates in the ortho position with respect to the hydroxyl group. This Desulfitobacterium hafniense (Desulfitobacterium frappieri) protein is Chlorophenol reductase.